Here is a 221-residue protein sequence, read N- to C-terminus: Probable septum site-determining protein MinC (221 aa).

This sequence belongs to the MinC family. Interacts with MinD and FtsZ.

Cell division inhibitor that blocks the formation of polar Z ring septums. Rapidly oscillates between the poles of the cell to destabilize FtsZ filaments that have formed before they mature into polar Z rings. Prevents FtsZ polymerization. This chain is Probable septum site-determining protein MinC, found in Shewanella woodyi (strain ATCC 51908 / MS32).